The primary structure comprises 582 residues: Aspartate--tRNA ligase (582 aa).

Glu-174 lines the L-aspartate pocket. The interval Gln-198–Lys-201 is aspartate. Arg-220 serves as a coordination point for L-aspartate. ATP-binding positions include Arg-220–Glu-222 and Gln-229. His-443 serves as a coordination point for L-aspartate. Residue Glu-477 coordinates ATP. Position 484 (Arg-484) interacts with L-aspartate. Residue Gly-529 to Arg-532 coordinates ATP.

It belongs to the class-II aminoacyl-tRNA synthetase family. Type 1 subfamily. In terms of assembly, homodimer.

The protein localises to the cytoplasm. It catalyses the reaction tRNA(Asp) + L-aspartate + ATP = L-aspartyl-tRNA(Asp) + AMP + diphosphate. Catalyzes the attachment of L-aspartate to tRNA(Asp) in a two-step reaction: L-aspartate is first activated by ATP to form Asp-AMP and then transferred to the acceptor end of tRNA(Asp). This is Aspartate--tRNA ligase from Streptococcus pyogenes serotype M6 (strain ATCC BAA-946 / MGAS10394).